A 215-amino-acid polypeptide reads, in one-letter code: MVEKSVLIDALKKAKEQAPERKFTESVDMTINLKNIDMSQPKNRIDETILLPHGNGRVVKIAVLGSGDIVTQARESGVELIMGPEEIERLGGAPREARKIASEHQFFLAETQVMSLVGRWLGPRLGPRGRMPQPIPAGTDIRPIVERLRKSVKIRTKDKMSFSLKVGTTAMSEEEIAENIDAVLKRILSKLEMGDFQVRSVYIKTTMGPSVKVEL.

It belongs to the universal ribosomal protein uL1 family. In terms of assembly, part of the 50S ribosomal subunit.

Functionally, binds directly to 23S rRNA. Probably involved in E site tRNA release. In terms of biological role, protein L1 is also a translational repressor protein, it controls the translation of its operon by binding to its mRNA. The polypeptide is Large ribosomal subunit protein uL1 (Methanospirillum hungatei JF-1 (strain ATCC 27890 / DSM 864 / NBRC 100397 / JF-1)).